A 286-amino-acid chain; its full sequence is Pantothenate synthetase (286 aa).

30 to 37 (MGNLHAGH) lines the ATP pocket. The active-site Proton donor is His-37. Gln-61 serves as a coordination point for (R)-pantoate. Gln-61 contributes to the beta-alanine binding site. Residue 149–152 (GQKD) participates in ATP binding. Gln-155 serves as a coordination point for (R)-pantoate. ATP is bound by residues Val-178 and 186–189 (LSSR).

This sequence belongs to the pantothenate synthetase family. As to quaternary structure, homodimer.

It is found in the cytoplasm. The enzyme catalyses (R)-pantoate + beta-alanine + ATP = (R)-pantothenate + AMP + diphosphate + H(+). The protein operates within cofactor biosynthesis; (R)-pantothenate biosynthesis; (R)-pantothenate from (R)-pantoate and beta-alanine: step 1/1. Catalyzes the condensation of pantoate with beta-alanine in an ATP-dependent reaction via a pantoyl-adenylate intermediate. In Stutzerimonas stutzeri (strain A1501) (Pseudomonas stutzeri), this protein is Pantothenate synthetase.